The chain runs to 629 residues: MKVEFDYKSLGLKVGLEIHRQLDTKKLFSAVPSQLHDNVDFTFERRLRPTMSELGEIDQAALEEFKRGRAFVYEGNYKYTDLVYVDEEPPHMPDEEALKVALQITYLLNAIPVDEVHFMRKIVIDGSNVSGFQRTAIVGMNGKVDTPWGSVGIPTICLEEDACRIIEQGERKAIYRLDRLGIPLIEIATTPDIHHPEQAKIVAKFIGDALRATRKVKRGLGTIRQDLNVSIKGGARIEIKGVQELDMIPVIIEREVQRQLNLLKIKEELQKRGVKEEDLKEEFYDVTDIFSGTGSKIIARTLKKGGKILAIKLPKFRGLIGFEIQPGRRLGTEMADRAKKYVKGIFHIDELPNYGISQEEVDKVVERLNLGEFDAFVLVAAEEEIAKKALREILQRAREAISGVPEETRRALPDGNTQYMRPLPGKARMYPETDIPPIFMSEELKKEILENLPEYPQAKVNRYVKEYKIDKSLAQTLVDDERDELFEELIAMGIKPSLAASILVVVLKGLKKEVSTDNITETHIKDAFKLLHENKIAKEALEEIFKELALHPEKTALQVAEEKGLTLLSEGEVEKIIEEIVRENIDVVKEKGMGAMGMLMGRAMAKLRGKADGKLVNQLVRKKIQEFTS.

Residues 405 to 426 (PEETRRALPDGNTQYMRPLPGK) form a disordered region.

This sequence belongs to the GatB/GatE family. GatE subfamily. As to quaternary structure, heterodimer of GatD and GatE.

It catalyses the reaction L-glutamyl-tRNA(Gln) + L-glutamine + ATP + H2O = L-glutaminyl-tRNA(Gln) + L-glutamate + ADP + phosphate + H(+). In terms of biological role, allows the formation of correctly charged Gln-tRNA(Gln) through the transamidation of misacylated Glu-tRNA(Gln) in organisms which lack glutaminyl-tRNA synthetase. The reaction takes place in the presence of glutamine and ATP through an activated gamma-phospho-Glu-tRNA(Gln). The GatDE system is specific for glutamate and does not act on aspartate. This is Glutamyl-tRNA(Gln) amidotransferase subunit E from Thermococcus sibiricus (strain DSM 12597 / MM 739).